The following is a 129-amino-acid chain: Glycine cleavage system H protein (129 aa).

The region spanning 24 to 106 (TYTVGITEHA…YAGGWIFKIK (83 aa)) is the Lipoyl-binding domain. At K65 the chain carries N6-lipoyllysine.

Belongs to the GcvH family. As to quaternary structure, the glycine cleavage system is composed of four proteins: P, T, L and H. The cofactor is (R)-lipoate.

In terms of biological role, the glycine cleavage system catalyzes the degradation of glycine. The H protein shuttles the methylamine group of glycine from the P protein to the T protein. The protein is Glycine cleavage system H protein of Escherichia coli O127:H6 (strain E2348/69 / EPEC).